Here is a 117-residue protein sequence, read N- to C-terminus: Large ribosomal subunit protein bL20 (117 aa).

The protein belongs to the bacterial ribosomal protein bL20 family.

In terms of biological role, binds directly to 23S ribosomal RNA and is necessary for the in vitro assembly process of the 50S ribosomal subunit. It is not involved in the protein synthesizing functions of that subunit. This chain is Large ribosomal subunit protein bL20, found in Rippkaea orientalis (strain PCC 8801 / RF-1) (Cyanothece sp. (strain PCC 8801)).